The sequence spans 214 residues: 3-isopropylmalate dehydratase small subunit (214 aa).

Belongs to the LeuD family. LeuD type 1 subfamily. In terms of assembly, heterodimer of LeuC and LeuD.

It carries out the reaction (2R,3S)-3-isopropylmalate = (2S)-2-isopropylmalate. The protein operates within amino-acid biosynthesis; L-leucine biosynthesis; L-leucine from 3-methyl-2-oxobutanoate: step 2/4. Catalyzes the isomerization between 2-isopropylmalate and 3-isopropylmalate, via the formation of 2-isopropylmaleate. The sequence is that of 3-isopropylmalate dehydratase small subunit from Desulforapulum autotrophicum (strain ATCC 43914 / DSM 3382 / VKM B-1955 / HRM2) (Desulfobacterium autotrophicum).